The sequence spans 280 residues: Fructose-1,6-bisphosphatase class 1 (280 aa).

Mg(2+) contacts are provided by E64, D83, L85, and D86. Substrate-binding positions include 86–89 (DGSS), Y190, and K221. Residue E227 participates in Mg(2+) binding.

The protein belongs to the FBPase class 1 family. Homotetramer. Mg(2+) serves as cofactor.

It localises to the cytoplasm. The enzyme catalyses beta-D-fructose 1,6-bisphosphate + H2O = beta-D-fructose 6-phosphate + phosphate. It participates in carbohydrate biosynthesis; gluconeogenesis. In Campylobacter hominis (strain ATCC BAA-381 / DSM 21671 / CCUG 45161 / LMG 19568 / NCTC 13146 / CH001A), this protein is Fructose-1,6-bisphosphatase class 1.